We begin with the raw amino-acid sequence, 340 residues long: Glutamine synthetase (340 aa).

A GS beta-grasp domain is found at 3–82 (IKAEYIWIDG…LCEVLHTDLT (80 aa)). The region spanning 88–340 (TRALLRPVAE…CTELARREQI (253 aa)) is the GS catalytic domain. Residues Glu109, Glu111, Glu171, and Glu178 each contribute to the Mg(2+) site. Glu276 contributes to the L-glutamate binding site.

This sequence belongs to the glutamine synthetase family. As to quaternary structure, homooctamer and homotetramer. The cofactor is Mg(2+).

Its subcellular location is the cytoplasm. The enzyme catalyses L-glutamate + NH4(+) + ATP = L-glutamine + ADP + phosphate + H(+). Catalyzes the ATP-dependent biosynthesis of glutamine from glutamate and ammonia. In Streptomyces hygroscopicus, this protein is Glutamine synthetase.